Reading from the N-terminus, the 859-residue chain is Suppressor protein MPT5 (859 aa).

The segment at M85–T108 is disordered. A compositionally biased stretch (low complexity) spans N86 to T108. The region spanning D188 to A596 is the PUM-HD domain. 8 Pumilio repeats span residues P209–E247, Q248–Q283, T284–K320, E325–D362, A363–V400, K401–N438, R439–N474, and D503–K539. Positions T620–T658 are disordered. Positions P628–A645 are enriched in basic residues. S662, S834, and S838 each carry phosphoserine.

The protein resides in the cytoplasm. In terms of biological role, RNA-binding protein involved in post-transcriptional regulation. Negatively regulates expression of HO by binding to the 3'-UTR of HO mRNA. Predominantly binds to mRNAs encoding chromatin modifiers and spindle pole body components. Recognizes and binds to 5'-TGTAA[CT]A[AT]TA-3' in the 3'-UTR of target mRNAs. Multicopy suppressor of POP2 mutation. Required for high temperature growth. In Saccharomyces cerevisiae (strain ATCC 204508 / S288c) (Baker's yeast), this protein is Suppressor protein MPT5 (MPT5).